The following is a 157-amino-acid chain: Small ribosomal subunit protein uS7 (157 aa).

This sequence belongs to the universal ribosomal protein uS7 family. In terms of assembly, part of the 30S ribosomal subunit. Contacts proteins S9 and S11.

Functionally, one of the primary rRNA binding proteins, it binds directly to 16S rRNA where it nucleates assembly of the head domain of the 30S subunit. Is located at the subunit interface close to the decoding center, probably blocks exit of the E-site tRNA. The sequence is that of Small ribosomal subunit protein uS7 from Leptospira biflexa serovar Patoc (strain Patoc 1 / Ames).